A 106-amino-acid polypeptide reads, in one-letter code: MLLGRRLAAMTELLKSVDYEVFGTVQGVCFRMYTEGEAKKRGLVGWVKNTSKGTVTGQVQGPEEKVDAMKSWLSKVGSPSSRIDRADFSNEKTISKLEYSDFSIRY.

Residues serine 16–tyrosine 106 form the Acylphosphatase-like domain. Residues arginine 31 and asparagine 49 contribute to the active site. Serine 100 carries the phosphoserine modification.

This sequence belongs to the acylphosphatase family.

The enzyme catalyses an acyl phosphate + H2O = a carboxylate + phosphate + H(+). The polypeptide is Acylphosphatase-2 (Acyp2) (Mus musculus (Mouse)).